An 85-amino-acid polypeptide reads, in one-letter code: Colicin-E6 immunity protein (85 aa).

Belongs to the cloacin immunity protein family.

Functionally, this protein inhibits the 16S RNA hydrolyzing activity of colicin E6 by binding with high affinity to the C-terminal catalytic domain of E6. This protein is able to protect a cell, which harbors the plasmid ColE6 against colicin E6. The polypeptide is Colicin-E6 immunity protein (imm) (Escherichia coli).